The primary structure comprises 707 residues: Matrix metalloproteinase-9 (707 aa).

An N-terminal signal peptide occupies residues 1–19; it reads MSLWQPLVLVLLVLGCCFA. Positions 20–93 are cleaved as a propeptide — activation peptide; the sequence is APRQRQSTLV…GELDSATLKA (74 aa). Asparagine 38 carries an N-linked (GlcNAc...) asparagine glycan. The short motif at 97–104 is the Cysteine switch element; that stretch reads PRCGVPDL. Cysteine 99 is a Zn(2+) binding site. N-linked (GlcNAc...) asparagine glycosylation is found at asparagine 120 and asparagine 127. Ca(2+)-binding residues include aspartate 131 and aspartate 165. The Zn(2+) site is built by histidine 175 and aspartate 177. Residues aspartate 182, glycine 183, aspartate 185, and leucine 187 each contribute to the Ca(2+) site. Histidine 190 is a binding site for Zn(2+). Ca(2+)-binding residues include glycine 197, glutamine 199, and aspartate 201. Position 203 (histidine 203) interacts with Zn(2+). Ca(2+) is bound by residues aspartate 205, aspartate 206, and glutamate 208. 3 consecutive Fibronectin type-II domains span residues 225–273, 283–331, and 342–390; these read ADGA…FCPS, ADGK…FCPT, and SAGE…FCPD. 6 disulfides stabilise this stretch: cysteine 230–cysteine 256, cysteine 244–cysteine 271, cysteine 288–cysteine 314, cysteine 302–cysteine 329, cysteine 347–cysteine 373, and cysteine 361–cysteine 388. Position 401 (histidine 401) interacts with Zn(2+). Glutamate 402 is a catalytic residue. Histidine 405 and histidine 411 together coordinate Zn(2+). A disordered region spans residues 431–508; that stretch reads LHKDDVNGIR…AGPSTATTVP (78 aa). Pro residues-rich tracts occupy residues 452–475 and 486–499; these read RPPT…PPTV and TGPP…PPTA. An intrachain disulfide couples cysteine 516 to cysteine 704. Hemopexin repeat units follow at residues 518–563, 564–608, 610–657, and 658–704; these read VNIF…WPAL, PRKL…GLGA, VAQV…FPGV, and PLDT…ILQC.

It belongs to the peptidase M10A family. Exists as monomer or homodimer; disulfide-linked. Also exists as heterodimer with LCN2. Macrophages and transformed cell lines produce only the monomeric form. Interacts with ECM1. In terms of assembly, (Microbial infection) Interacts with Staphylococcus aureus protein SSL5; this interaction inhibits MMP9 activity. Zn(2+) serves as cofactor. Ca(2+) is required as a cofactor. In terms of processing, processing of the precursor yields different active forms of 64, 67 and 82 kDa. Sequentially processing by MMP3 yields the 82 kDa matrix metalloproteinase-9. Post-translationally, N- and O-glycosylated. As to expression, detected in neutrophils (at protein level). Produced by normal alveolar macrophages and granulocytes.

It is found in the secreted. Its subcellular location is the extracellular space. It localises to the extracellular matrix. The catalysed reaction is Cleavage of gelatin types I and V and collagen types IV and V.. Its activity is regulated as follows. Inhibited by histatin-3 1/24 (histatin-5). Inhibited by ECM1. Functionally, matrix metalloproteinase that plays an essential role in local proteolysis of the extracellular matrix and in leukocyte migration. Could play a role in bone osteoclastic resorption. Cleaves KiSS1 at a Gly-|-Leu bond. Cleaves NINJ1 to generate the Secreted ninjurin-1 form. Cleaves type IV and type V collagen into large C-terminal three quarter fragments and shorter N-terminal one quarter fragments. Degrades fibronectin but not laminin or Pz-peptide. The sequence is that of Matrix metalloproteinase-9 (MMP9) from Homo sapiens (Human).